The chain runs to 625 residues: Phosphomethylpyrimidine synthase (625 aa).

Substrate is bound by residues Asn-230, Met-259, Tyr-288, His-324, 344–346 (SRG), 385–388 (DGLR), and Glu-424. Zn(2+) is bound at residue His-428. Substrate is bound at residue Tyr-451. His-492 contacts Zn(2+). [4Fe-4S] cluster is bound by residues Cys-572, Cys-575, and Cys-580.

This sequence belongs to the ThiC family. Homodimer. Requires [4Fe-4S] cluster as cofactor.

The catalysed reaction is 5-amino-1-(5-phospho-beta-D-ribosyl)imidazole + S-adenosyl-L-methionine = 4-amino-2-methyl-5-(phosphooxymethyl)pyrimidine + CO + 5'-deoxyadenosine + formate + L-methionine + 3 H(+). It functions in the pathway cofactor biosynthesis; thiamine diphosphate biosynthesis. Its function is as follows. Catalyzes the synthesis of the hydroxymethylpyrimidine phosphate (HMP-P) moiety of thiamine from aminoimidazole ribotide (AIR) in a radical S-adenosyl-L-methionine (SAM)-dependent reaction. This Xanthomonas campestris pv. campestris (strain 8004) protein is Phosphomethylpyrimidine synthase.